The sequence spans 250 residues: DNA repair protein RecO (250 aa).

This sequence belongs to the RecO family.

Functionally, involved in DNA repair and RecF pathway recombination. This is DNA repair protein RecO from Rhodopseudomonas palustris (strain TIE-1).